Consider the following 211-residue polypeptide: Glutathione S-transferase class-mu 28 kDa isozyme (211 aa).

Residues Asp4–Gly86 form the GST N-terminal domain. Glutathione-binding residues include Tyr10, Arg16, Trp41, Lys45, Leu53, Glu70, Ser71, and Asp104. The GST C-terminal domain occupies Thr88 to Phe211.

This sequence belongs to the GST superfamily. Mu family. In terms of assembly, homodimer.

It carries out the reaction RX + glutathione = an S-substituted glutathione + a halide anion + H(+). Its function is as follows. Conjugation of reduced glutathione to a wide number of exogenous and endogenous hydrophobic electrophiles. Functionally, GST isoenzymes appear to play a central role in the parasite detoxification system. Other functions are also suspected including a role in increasing the solubility of haematin in the parasite gut. The chain is Glutathione S-transferase class-mu 28 kDa isozyme from Schistosoma bovis (Blood fluke).